A 391-amino-acid chain; its full sequence is Phosphoglycerate kinase (391 aa).

Substrate contacts are provided by residues 21 to 23 (DLN), Arg36, 59 to 62 (HLGR), Arg113, and Arg146. ATP-binding positions include Lys197, Glu319, and 345–348 (GGDT).

This sequence belongs to the phosphoglycerate kinase family. As to quaternary structure, monomer.

Its subcellular location is the cytoplasm. It catalyses the reaction (2R)-3-phosphoglycerate + ATP = (2R)-3-phospho-glyceroyl phosphate + ADP. It participates in carbohydrate degradation; glycolysis; pyruvate from D-glyceraldehyde 3-phosphate: step 2/5. This chain is Phosphoglycerate kinase, found in Stenotrophomonas maltophilia (strain R551-3).